A 265-amino-acid chain; its full sequence is Phosphate import ATP-binding protein PstB 2 (265 aa).

The ABC transporter domain occupies 13–260; that stretch reads FRTENLNVYY…PTKQATRDYV (248 aa). 45–52 serves as a coordination point for ATP; that stretch reads GPSGCGKS.

It belongs to the ABC transporter superfamily. Phosphate importer (TC 3.A.1.7) family. As to quaternary structure, the complex is composed of two ATP-binding proteins (PstB), two transmembrane proteins (PstC and PstA) and a solute-binding protein (PstS).

It is found in the cell inner membrane. The enzyme catalyses phosphate(out) + ATP + H2O = ADP + 2 phosphate(in) + H(+). Functionally, part of the ABC transporter complex PstSACB involved in phosphate import. Responsible for energy coupling to the transport system. This chain is Phosphate import ATP-binding protein PstB 2, found in Synechococcus sp. (strain JA-2-3B'a(2-13)) (Cyanobacteria bacterium Yellowstone B-Prime).